The sequence spans 455 residues: Dihydrolipoyllysine-residue succinyltransferase component of 2-oxoglutarate dehydrogenase complex, mitochondrial (455 aa).

Residues 1-68 (MLSRSRCASR…RFFRTTAVCK (68 aa)) constitute a mitochondrion transit peptide. The region spanning 71 to 145 (VITVKTPAFA…EGGTPLFTLR (75 aa)) is the Lipoyl-binding domain. Residue Ser-82 is modified to Phosphoserine. Lys-111 is subject to N6-lipoyllysine. Lys-155 bears the N6-acetyllysine mark. Residues 155–173 (KPAAAPAAAAPKAEPTVSA) are compositionally biased toward low complexity. A disordered region spans residues 155–220 (KPAAAPAAAA…PRAEAGAGVG (66 aa)). The segment covering 174 to 193 (VPPPPAAPIPTQMPPVPSPS) has biased composition (pro residues). Lys-269, Lys-274, Lys-275, Lys-279, and Lys-309 each carry N6-acetyllysine. Residues His-426 and Asp-430 contribute to the active site.

The protein belongs to the 2-oxoacid dehydrogenase family. The 2-oxoglutarate dehydrogenase complex is composed of OGDH (2-oxoglutarate dehydrogenase; E1), DLST (dihydrolipoamide succinyltransferase; E2), DLD (dihydrolipoamide dehydrogenase; E3) and the assembly factor KGD4. It contains multiple copies of the three enzymatic components (E1, E2 and E3). In the nucleus, the 2-oxoglutarate dehydrogenase complex associates with KAT2A. Interacts with ABHD11; this interaction maintains the functional lipoylation of the 2-oxoglutarate dehydrogenase complex. (R)-lipoate serves as cofactor.

It localises to the mitochondrion matrix. Its subcellular location is the nucleus. The enzyme catalyses N(6)-[(R)-dihydrolipoyl]-L-lysyl-[protein] + succinyl-CoA = N(6)-[(R)-S(8)-succinyldihydrolipoyl]-L-lysyl-[protein] + CoA. The protein operates within amino-acid degradation; L-lysine degradation via saccharopine pathway; glutaryl-CoA from L-lysine: step 6/6. Its pathway is carbohydrate metabolism; tricarboxylic acid cycle. In terms of biological role, dihydrolipoamide succinyltransferase (E2) component of the 2-oxoglutarate dehydrogenase complex. The 2-oxoglutarate dehydrogenase complex catalyzes the overall conversion of 2-oxoglutarate to succinyl-CoA and CO(2). The 2-oxoglutarate dehydrogenase complex is mainly active in the mitochondrion. A fraction of the 2-oxoglutarate dehydrogenase complex also localizes in the nucleus and is required for lysine succinylation of histones: associates with KAT2A on chromatin and provides succinyl-CoA to histone succinyltransferase KAT2A. In Bos taurus (Bovine), this protein is Dihydrolipoyllysine-residue succinyltransferase component of 2-oxoglutarate dehydrogenase complex, mitochondrial.